The sequence spans 240 residues: Small ribosomal subunit protein uS2 (240 aa).

It belongs to the universal ribosomal protein uS2 family.

This is Small ribosomal subunit protein uS2 (rpsB) from Pasteurella multocida (strain Pm70).